A 92-amino-acid polypeptide reads, in one-letter code: Small ribosomal subunit protein uS19 (92 aa).

It belongs to the universal ribosomal protein uS19 family.

In terms of biological role, protein S19 forms a complex with S13 that binds strongly to the 16S ribosomal RNA. In Malacoplasma penetrans (strain HF-2) (Mycoplasma penetrans), this protein is Small ribosomal subunit protein uS19.